The chain runs to 144 residues: MKTYSQKASEIQREWLVVDAQNQVLGRLATQIATLIRGKHKPTYTPSMDGGDFVIVVNAEKIRVTGDKANQKIYYRHSNFPGGLKRTAYKVMMQTHPERIIYFAVKGMLPRNRLSRHIIKKLKVYAGESHPHASQSPKVYAVKG.

It belongs to the universal ribosomal protein uL13 family. In terms of assembly, part of the 50S ribosomal subunit.

In terms of biological role, this protein is one of the early assembly proteins of the 50S ribosomal subunit, although it is not seen to bind rRNA by itself. It is important during the early stages of 50S assembly. The polypeptide is Large ribosomal subunit protein uL13 (Herpetosiphon aurantiacus (strain ATCC 23779 / DSM 785 / 114-95)).